The chain runs to 180 residues: Adenine phosphoribosyltransferase (180 aa).

Position 2 is an N-acetylserine (Ser-2). Phosphoserine is present on residues Ser-4, Ser-15, and Ser-30. Tyr-60 carries the phosphotyrosine modification. The residue at position 66 (Ser-66) is a Phosphoserine. Position 114 is an N6-acetyllysine (Lys-114). Thr-135 bears the Phosphothreonine mark.

The protein belongs to the purine/pyrimidine phosphoribosyltransferase family. As to quaternary structure, homodimer.

Its subcellular location is the cytoplasm. The enzyme catalyses AMP + diphosphate = 5-phospho-alpha-D-ribose 1-diphosphate + adenine. Its pathway is purine metabolism; AMP biosynthesis via salvage pathway; AMP from adenine: step 1/1. Its function is as follows. Catalyzes a salvage reaction resulting in the formation of AMP, that is energically less costly than de novo synthesis. The polypeptide is Adenine phosphoribosyltransferase (Rattus norvegicus (Rat)).